A 111-amino-acid chain; its full sequence is Large ribosomal subunit protein uL22 (111 aa).

The protein belongs to the universal ribosomal protein uL22 family. As to quaternary structure, part of the 50S ribosomal subunit.

In terms of biological role, this protein binds specifically to 23S rRNA; its binding is stimulated by other ribosomal proteins, e.g. L4, L17, and L20. It is important during the early stages of 50S assembly. It makes multiple contacts with different domains of the 23S rRNA in the assembled 50S subunit and ribosome. Its function is as follows. The globular domain of the protein is located near the polypeptide exit tunnel on the outside of the subunit, while an extended beta-hairpin is found that lines the wall of the exit tunnel in the center of the 70S ribosome. The chain is Large ribosomal subunit protein uL22 from Pelobacter propionicus (strain DSM 2379 / NBRC 103807 / OttBd1).